We begin with the raw amino-acid sequence, 352 residues long: Histidine biosynthesis bifunctional protein HisB (352 aa).

Residues 1–164 (MSQKILFIDR…EIENEILSSF (164 aa)) are histidinol-phosphatase. Catalysis depends on Asp-9, which acts as the Nucleophile. Residues Asp-9 and Asp-11 each contribute to the Mg(2+) site. Residue Asp-11 is the Proton donor of the active site. Residues Cys-93, His-95, Cys-101, and Cys-103 each contribute to the Zn(2+) site. Residue Asp-130 coordinates Mg(2+). Residues 165–352 (RSASYQRTTK…ENLASSKGVI (188 aa)) form an imidazoleglycerol-phosphate dehydratase region.

In the N-terminal section; belongs to the histidinol-phosphatase family. This sequence in the C-terminal section; belongs to the imidazoleglycerol-phosphate dehydratase family. Mg(2+) serves as cofactor. Zn(2+) is required as a cofactor.

Its subcellular location is the cytoplasm. The enzyme catalyses D-erythro-1-(imidazol-4-yl)glycerol 3-phosphate = 3-(imidazol-4-yl)-2-oxopropyl phosphate + H2O. It catalyses the reaction L-histidinol phosphate + H2O = L-histidinol + phosphate. Its pathway is amino-acid biosynthesis; L-histidine biosynthesis; L-histidine from 5-phospho-alpha-D-ribose 1-diphosphate: step 6/9. It functions in the pathway amino-acid biosynthesis; L-histidine biosynthesis; L-histidine from 5-phospho-alpha-D-ribose 1-diphosphate: step 8/9. This Campylobacter jejuni subsp. jejuni serotype O:2 (strain ATCC 700819 / NCTC 11168) protein is Histidine biosynthesis bifunctional protein HisB.